A 262-amino-acid polypeptide reads, in one-letter code: Tryptophan synthase alpha chain (262 aa).

Active-site proton acceptor residues include E48 and D59.

The protein belongs to the TrpA family. In terms of assembly, tetramer of two alpha and two beta chains.

The catalysed reaction is (1S,2R)-1-C-(indol-3-yl)glycerol 3-phosphate + L-serine = D-glyceraldehyde 3-phosphate + L-tryptophan + H2O. Its pathway is amino-acid biosynthesis; L-tryptophan biosynthesis; L-tryptophan from chorismate: step 5/5. Functionally, the alpha subunit is responsible for the aldol cleavage of indoleglycerol phosphate to indole and glyceraldehyde 3-phosphate. This chain is Tryptophan synthase alpha chain, found in Helicobacter pylori (strain G27).